A 276-amino-acid chain; its full sequence is Small ribosomal subunit protein uS3 (276 aa).

A KH type-2 domain is found at 39-110 (IRRETMKFLK…KINIKIKEIK (72 aa)).

Belongs to the universal ribosomal protein uS3 family. In terms of assembly, part of the 30S ribosomal subunit. Forms a tight complex with proteins S10 and S14.

In terms of biological role, binds the lower part of the 30S subunit head. Binds mRNA in the 70S ribosome, positioning it for translation. The protein is Small ribosomal subunit protein uS3 of Borrelia recurrentis (strain A1).